Here is a 138-residue protein sequence, read N- to C-terminus: Cytochrome b5 (138 aa).

One can recognise a Cytochrome b5 heme-binding domain in the interval 14-90 (GRYYRLEEVQ…SETFIIGELH (77 aa)). 2 residues coordinate heme: His49 and His73. The helical transmembrane segment at 114–136 (SWSNWVIPAIAAIIVALMYRSYM) threads the bilayer.

Belongs to the cytochrome b5 family.

It localises to the endoplasmic reticulum membrane. Its subcellular location is the microsome membrane. In terms of biological role, cytochrome b5 is a membrane-bound hemoprotein functioning as an electron carrier for several membrane-bound oxygenases. The sequence is that of Cytochrome b5 (CYB5A) from Gallus gallus (Chicken).